We begin with the raw amino-acid sequence, 366 residues long: Alanine racemase (366 aa).

Residue Lys33 is the Proton acceptor; specific for D-alanine of the active site. Position 33 is an N6-(pyridoxal phosphate)lysine (Lys33). A substrate-binding site is contributed by Arg129. Residue Tyr253 is the Proton acceptor; specific for L-alanine of the active site. Residue Met301 coordinates substrate.

It belongs to the alanine racemase family. Pyridoxal 5'-phosphate is required as a cofactor.

The enzyme catalyses L-alanine = D-alanine. Its pathway is amino-acid biosynthesis; D-alanine biosynthesis; D-alanine from L-alanine: step 1/1. In terms of biological role, catalyzes the interconversion of L-alanine and D-alanine. May also act on other amino acids. The protein is Alanine racemase (alr) of Xanthomonas oryzae pv. oryzae (strain KACC10331 / KXO85).